A 530-amino-acid polypeptide reads, in one-letter code: Bifunctional purine biosynthesis protein PurH (530 aa).

The region spanning 1-148 is the MGS-like domain; sequence MNNARPIRRA…KNHKDVTIVV (148 aa).

It belongs to the PurH family.

The catalysed reaction is (6R)-10-formyltetrahydrofolate + 5-amino-1-(5-phospho-beta-D-ribosyl)imidazole-4-carboxamide = 5-formamido-1-(5-phospho-D-ribosyl)imidazole-4-carboxamide + (6S)-5,6,7,8-tetrahydrofolate. It catalyses the reaction IMP + H2O = 5-formamido-1-(5-phospho-D-ribosyl)imidazole-4-carboxamide. The protein operates within purine metabolism; IMP biosynthesis via de novo pathway; 5-formamido-1-(5-phospho-D-ribosyl)imidazole-4-carboxamide from 5-amino-1-(5-phospho-D-ribosyl)imidazole-4-carboxamide (10-formyl THF route): step 1/1. It functions in the pathway purine metabolism; IMP biosynthesis via de novo pathway; IMP from 5-formamido-1-(5-phospho-D-ribosyl)imidazole-4-carboxamide: step 1/1. The chain is Bifunctional purine biosynthesis protein PurH from Vibrio vulnificus (strain YJ016).